A 379-amino-acid chain; its full sequence is Epoxyqueuosine reductase (379 aa).

D139 (proton donor) is an active-site residue. Residues 181–213 (IPLPVDQPVEEGCGKCVACMTICPTGAIVEPYT) form the 4Fe-4S ferredoxin-type domain. Residues C193, C196, C199, C203, C219, C246, C249, and C253 each contribute to the [4Fe-4S] cluster site.

Belongs to the QueG family. As to quaternary structure, monomer. Cob(II)alamin serves as cofactor. The cofactor is [4Fe-4S] cluster.

The protein localises to the cytoplasm. It carries out the reaction epoxyqueuosine(34) in tRNA + AH2 = queuosine(34) in tRNA + A + H2O. It participates in tRNA modification; tRNA-queuosine biosynthesis. Its function is as follows. Catalyzes the conversion of epoxyqueuosine (oQ) to queuosine (Q), which is a hypermodified base found in the wobble positions of tRNA(Asp), tRNA(Asn), tRNA(His) and tRNA(Tyr). The sequence is that of Epoxyqueuosine reductase from Shigella dysenteriae serotype 1 (strain Sd197).